The primary structure comprises 362 residues: MVSPIEVRLQMTYPEFTVSTDLALPGAGITALFGPSGSGKTTCLRCIAGLEKAEQGFIRVHDEVWQDSENGVFLAPHKRAIGYVFQEASLFDHLSVRANLEFGLKRIPRPQRRIELQQATELLGIDHLLERRPDKLSGGERQRVGIARALLTSPRLMLLDEPLAALDTKRKGEILPYLERLHRELDIPMLYVSHAQDEVARLADHLVLLEAGKVLASGPIRETLARLDLPLAMGDDAGVVIEGTVSAYDRHYQLLTVTLPGSNLCMRVAHAELQIGTLLRVKVQARDVSLNLQSDDHSSILNRLPVTVLEEALADNLAHVLVKLNAGGTPLLARITRYSSDQLNLHRGQTLWAQIKAVAVLA.

Residues 2-236 (VSPIEVRLQM…LDLPLAMGDD (235 aa)) enclose the ABC transporter domain. 34–41 (GPSGSGKT) provides a ligand contact to ATP. The 66-residue stretch at 297–362 (HSSILNRLPV…AQIKAVAVLA (66 aa)) folds into the Mop domain.

This sequence belongs to the ABC transporter superfamily. Molybdate importer (TC 3.A.1.8) family. The complex is composed of two ATP-binding proteins (ModC), two transmembrane proteins (ModB) and a solute-binding protein (ModA).

It is found in the cell inner membrane. It carries out the reaction molybdate(out) + ATP + H2O = molybdate(in) + ADP + phosphate + H(+). Part of the ABC transporter complex ModABC involved in molybdenum import. Responsible for energy coupling to the transport system. The polypeptide is Molybdenum import ATP-binding protein ModC (Pseudomonas syringae pv. tomato (strain ATCC BAA-871 / DC3000)).